The chain runs to 46 residues: MGIFNGIIEFLSNINFEVIAQLTMIAMIGIAGPMIIFLLAVRRGNL.

The residue at position 1 (Met-1) is an N-formylmethionine. Topologically, residues 1–20 (MGIFNGIIEFLSNINFEVIA) are lumenal. A helical transmembrane segment spans residues 21 to 38 (QLTMIAMIGIAGPMIIFL). Over 39-46 (LAVRRGNL) the chain is Cytoplasmic.

This sequence belongs to the Psb30/Ycf12 family. As to quaternary structure, PSII is composed of 1 copy each of membrane proteins PsbA, PsbB, PsbC, PsbD, PsbE, PsbF, PsbH, PsbI, PsbJ, PsbK, PsbL, PsbM, PsbT, PsbX, PsbY, PsbZ, Psb30/Ycf12, peripheral proteins PsbO, CyanoQ (PsbQ), PsbU, PsbV and a large number of cofactors. It forms dimeric complexes. Part of a photosystem II (PSII) assembly intermediate complex PSII-I; crystallized from a strain deleted of psbJ, it forms monomeric PSII before addition of the oxygen evolving complex. PSII-I includes 3 assembly factors not found in mature PSII (Psb27, Psb28 and Psb34). PSII binds multiple chlorophylls, carotenoids and specific lipids. serves as cofactor.

It is found in the cellular thylakoid membrane. In terms of biological role, a core subunit of photosystem II (PSII). PSII is a light-driven water plastoquinone oxidoreductase, using light energy to abstract electrons from H(2)O, generating a proton gradient subsequently used for ATP formation. Helps stabilize PSII. In Thermosynechococcus vestitus (strain NIES-2133 / IAM M-273 / BP-1), this protein is Photosystem II reaction center protein Psb30.